Reading from the N-terminus, the 313-residue chain is Apolipoprotein E (313 aa).

An N-terminal signal peptide occupies residues 1 to 18 (MKVLWVALVITLLAGCQA). A run of 8 repeats spans residues 79 to 100 (VLMD…EQLG), 101 to 122 (PIAQ…ARLA), 123 to 144 (SDME…AVMG), 145 to 166 (QTTD…KRLL), 167 to 188 (RDAE…EGSE), 189 to 209 (RSVS…RGRA), 210 to 229 (GTLA…QKLR), and 230 to 251 (GRVE…EQLE). Residues 79–251 (VLMDETMKEV…HLEEIREQLE (173 aa)) form an 8 X 22 AA approximate tandem repeats region. Residues 157–167 (HLRKLRKRLLR) are LDL and other lipoprotein receptors binding. Position 161-164 (161-164 (LRKR)) interacts with heparin. Residues 209 to 286 (AGTLASQTLR…SWFEPLVEDM (78 aa)) form a lipid-binding and lipoprotein association region. Position 225–232 (225–232 (HQKLRGRV)) interacts with heparin. Residues 262–313 (SQIRLQAEAFQARLKSWFEPLVEDMQRQWAGLVEKVQLAMATSSTSAPSENH) form a homooligomerization region. The segment at 274–286 (RLKSWFEPLVEDM) is specificity for association with VLDL.

Belongs to the apolipoprotein A1/A4/E family. As to quaternary structure, homotetramer. May interact with ABCA1; functionally associated with ABCA1 in the biogenesis of HDLs. May interact with APP/A4 amyloid-beta peptide; the interaction is extremely stable in vitro but its physiological significance is unclear. May interact with MAPT. May interact with MAP2. In the cerebrospinal fluid, interacts with secreted SORL1. Interacts with PMEL; this allows the loading of PMEL luminal fragment on ILVs to induce fibril nucleation. Post-translationally, APOE exists as multiple glycosylated and sialylated glycoforms within cells and in plasma. The extent of glycosylation and sialylation are tissue and context specific. Glycated in plasma VLDL. In terms of processing, phosphorylated by FAM20C in the extracellular medium.

The protein resides in the secreted. It is found in the extracellular space. Its subcellular location is the extracellular matrix. The protein localises to the extracellular vesicle. It localises to the endosome. The protein resides in the multivesicular body. Its function is as follows. APOE is an apolipoprotein, a protein associating with lipid particles, that mainly functions in lipoprotein-mediated lipid transport between organs via the plasma and interstitial fluids. APOE is a core component of plasma lipoproteins and is involved in their production, conversion and clearance. Apolipoproteins are amphipathic molecules that interact both with lipids of the lipoprotein particle core and the aqueous environment of the plasma. As such, APOE associates with chylomicrons, chylomicron remnants, very low density lipoproteins (VLDL) and intermediate density lipoproteins (IDL) but shows a preferential binding to high-density lipoproteins (HDL). It also binds a wide range of cellular receptors including the LDL receptor/LDLR and the very low-density lipoprotein receptor/VLDLR that mediate the cellular uptake of the APOE-containing lipoprotein particles. Finally, APOE also has a heparin-binding activity and binds heparan-sulfate proteoglycans on the surface of cells, a property that supports the capture and the receptor-mediated uptake of APOE-containing lipoproteins by cells. The polypeptide is Apolipoprotein E (APOE) (Balaenoptera acutorostrata scammoni (North Pacific minke whale)).